The following is a 463-amino-acid chain: Glutamate--tRNA ligase 1 (463 aa).

The 'HIGH' region signature appears at 10-20 (PSPTGYLHIGG). A 'KMSKS' region motif is present at residues 238–242 (KLSKR). K241 provides a ligand contact to ATP.

Belongs to the class-I aminoacyl-tRNA synthetase family. Glutamate--tRNA ligase type 1 subfamily. In terms of assembly, monomer.

It is found in the cytoplasm. The catalysed reaction is tRNA(Glu) + L-glutamate + ATP = L-glutamyl-tRNA(Glu) + AMP + diphosphate. Catalyzes the attachment of glutamate to tRNA(Glu) in a two-step reaction: glutamate is first activated by ATP to form Glu-AMP and then transferred to the acceptor end of tRNA(Glu). This Helicobacter pylori (strain J99 / ATCC 700824) (Campylobacter pylori J99) protein is Glutamate--tRNA ligase 1.